A 672-amino-acid chain; its full sequence is uncharacterized protein (672 aa).

A signal peptide spans 1-24 (MKTLKTLKIFIIICIASVSLASFA). 6 helical membrane passes run 226-246 (IIGAALILYTMFFAFNMALNK), 254-274 (IALFVIKFLLVAYFSIGLGPL), 410-430 (IILAAGLVFSVIFLSILLYFI), 436-456 (CMITIYVMTYISPIFIPMALF), 469-489 (VCISCALQPAVVAGFIALLIT), and 562-582 (VVSILAELLCVLVFSVIFYYF). The tract at residues 626–672 (ASQGKPSVGDKPDVGGKRKEGEQQGGDSESGAGGGLADLASGSGGGK) is disordered. Positions 633–647 (VGDKPDVGGKRKEGE) are enriched in basic and acidic residues. Gly residues predominate over residues 656–672 (GAGGGLADLASGSGGGK).

Belongs to the TrbL/VirB6 family.

It is found in the cell membrane. This is an uncharacterized protein from Rickettsia felis (strain ATCC VR-1525 / URRWXCal2) (Rickettsia azadi).